Consider the following 247-residue polypeptide: Submandibular gland secretory Glx-rich protein CB (247 aa).

An N-terminal signal peptide occupies residues 1–18 (MLVVLLTAALLALSSAQG). Residues 14 to 219 (SSAQGTDEEV…PQHYRGRPPK (206 aa)) form a disordered region. 7 stretches are compositionally biased toward low complexity: residues 39–50 (PVDSGSDPPSAD), 58–71 (EGESAPPANEEPPA), 81–93 (QQEPTQAENQEPP), 104–116 (QQEPTQAENQEPP), 126–139 (QQQQPTQAENQEPP), 150–159 (QQESTQAENQ), and 178–196 (VESPPSSPENSQEQPQQTN). A run of 5 repeats spans residues 67 to 89 (EEPPATSGSEEEQQQQEPTQAEN), 90 to 112 (QEPPATSGSEEEQQQQEPTQAEN), 113 to 135 (QEPPATSGSEEEQQQQQPTQAEN), 136 to 158 (QEPPATSGSEEEQQQQESTQAEN), and 159 to 181 (QEPSDSAGEGQETQPEEGNVESP). Residues 67–181 (EEPPATSGSE…QPEEGNVESP (115 aa)) form a 5 X 23 AA tandem repeats region. Residues 197–212 (PEEKPPAPKTQEEPQH) show a composition bias toward basic and acidic residues.

As to expression, submandibular gland acinar cells.

It localises to the secreted. GRP proteins have a marked affinity for hydroxyapatite. They may play a role in the formation of the protective acquired pellicle at the saliva-tooth interface. In Rattus norvegicus (Rat), this protein is Submandibular gland secretory Glx-rich protein CB (Grpcb).